Here is a 278-residue protein sequence, read N- to C-terminus: Digeranylgeranylglyceryl phosphate synthase (278 aa).

8 consecutive transmembrane segments (helical) span residues 12–32 (LKNC…ASYF), 34–54 (LATV…CGFG), 91–111 (LLVF…LMAV), 129–149 (IIGN…GGIA), 153–173 (IDVT…REII), 204–224 (FLLV…FFGI), 225–245 (YYML…YNLV), and 257–277 (SRNI…GSLF).

This sequence belongs to the UbiA prenyltransferase family. DGGGP synthase subfamily. The cofactor is Mg(2+).

Its subcellular location is the cell membrane. It catalyses the reaction sn-3-O-(geranylgeranyl)glycerol 1-phosphate + (2E,6E,10E)-geranylgeranyl diphosphate = 2,3-bis-O-(geranylgeranyl)-sn-glycerol 1-phosphate + diphosphate. It functions in the pathway membrane lipid metabolism; glycerophospholipid metabolism. Functionally, prenyltransferase that catalyzes the transfer of the geranylgeranyl moiety of geranylgeranyl diphosphate (GGPP) to the C2 hydroxyl of (S)-3-O-geranylgeranylglyceryl phosphate (GGGP). This reaction is the second ether-bond-formation step in the biosynthesis of archaeal membrane lipids. This is Digeranylgeranylglyceryl phosphate synthase from Methanococcus maripaludis (strain C7 / ATCC BAA-1331).